Consider the following 100-residue polypeptide: MELTPRDKDKLLLFSAAQLAERRRARGLKLNYPEAVALISFEILEGARDGKSVAELMSAGREILTRDDVMEGVAEMVDEVQVEATFPDGTKLVTVHSPIV.

This sequence belongs to the urease gamma subunit family. As to quaternary structure, heterotrimer of UreA (gamma), UreB (beta) and UreC (alpha) subunits. Three heterotrimers associate to form the active enzyme.

It localises to the cytoplasm. The catalysed reaction is urea + 2 H2O + H(+) = hydrogencarbonate + 2 NH4(+). It functions in the pathway nitrogen metabolism; urea degradation; CO(2) and NH(3) from urea (urease route): step 1/1. This Chromohalobacter salexigens (strain ATCC BAA-138 / DSM 3043 / CIP 106854 / NCIMB 13768 / 1H11) protein is Urease subunit gamma.